Consider the following 255-residue polypeptide: Triosephosphate isomerase (255 aa).

9–11 (NWK) lines the substrate pocket. The active-site Electrophile is the histidine 96. The Proton acceptor role is filled by glutamate 168. The substrate site is built by glycine 174 and serine 213.

Belongs to the triosephosphate isomerase family. As to quaternary structure, homodimer.

It is found in the cytoplasm. It carries out the reaction D-glyceraldehyde 3-phosphate = dihydroxyacetone phosphate. The protein operates within carbohydrate biosynthesis; gluconeogenesis. It participates in carbohydrate degradation; glycolysis; D-glyceraldehyde 3-phosphate from glycerone phosphate: step 1/1. Its function is as follows. Involved in the gluconeogenesis. Catalyzes stereospecifically the conversion of dihydroxyacetone phosphate (DHAP) to D-glyceraldehyde-3-phosphate (G3P). This chain is Triosephosphate isomerase, found in Buchnera aphidicola subsp. Acyrthosiphon pisum (strain APS) (Acyrthosiphon pisum symbiotic bacterium).